The chain runs to 478 residues: Ribosomal RNA small subunit methyltransferase F (478 aa).

Residues 121 to 127 (ASAPGSK), Glu145, Asp172, and Asp190 contribute to the S-adenosyl-L-methionine site. The active-site Nucleophile is the Cys243.

Belongs to the class I-like SAM-binding methyltransferase superfamily. RsmB/NOP family.

It localises to the cytoplasm. It carries out the reaction cytidine(1407) in 16S rRNA + S-adenosyl-L-methionine = 5-methylcytidine(1407) in 16S rRNA + S-adenosyl-L-homocysteine + H(+). In terms of biological role, specifically methylates the cytosine at position 1407 (m5C1407) of 16S rRNA. The protein is Ribosomal RNA small subunit methyltransferase F of Shewanella woodyi (strain ATCC 51908 / MS32).